The chain runs to 279 residues: MNYIGAHVSSSGGLEKAVFRAFQIKATTFSFFTKNQRQWISLPLQKKNIEDFKKACIKYNFSPEKILPHSSYLINLGHPIDFFLEKSRVAFIDEIVRCDQLGLRFLNFHPGSHLNKISEVTCLSRISESINIALEKTKNVVAVIENTAGQGTNIGYRFEHLYEIIKKIDDKSRIGVCIDTCHLFASGYDLRTKIDYESTFNKFFDLIEMKYLKGFHLNDSKKQFNSRVDRHENLGLGEIGKSVFKWIIKNKNFHNIPMILETINPKLWEKEIDWLRSLQ.

Zn(2+) contacts are provided by histidine 69, histidine 109, glutamate 145, aspartate 179, histidine 182, histidine 216, aspartate 229, histidine 231, and glutamate 261.

Belongs to the AP endonuclease 2 family. Requires Zn(2+) as cofactor.

It carries out the reaction Endonucleolytic cleavage to 5'-phosphooligonucleotide end-products.. Endonuclease IV plays a role in DNA repair. It cleaves phosphodiester bonds at apurinic or apyrimidinic (AP) sites, generating a 3'-hydroxyl group and a 5'-terminal sugar phosphate. The sequence is that of Probable endonuclease 4 from Buchnera aphidicola subsp. Schizaphis graminum (strain Sg).